Reading from the N-terminus, the 408-residue chain is UDP-N-acetylglucosamine--N-acetylmuramyl-(pentapeptide) pyrophosphoryl-undecaprenol N-acetylglucosamine transferase (408 aa).

Residues 1–20 (MNDTVKKPTGGRGDDPLPAG) are disordered. Residues 41 to 43 (TAG), Asn160, Arg197, Ser231, and Gln327 each bind UDP-N-acetyl-alpha-D-glucosamine.

It belongs to the glycosyltransferase 28 family. MurG subfamily.

It is found in the cell membrane. The enzyme catalyses di-trans,octa-cis-undecaprenyl diphospho-N-acetyl-alpha-D-muramoyl-L-alanyl-D-glutamyl-meso-2,6-diaminopimeloyl-D-alanyl-D-alanine + UDP-N-acetyl-alpha-D-glucosamine = di-trans,octa-cis-undecaprenyl diphospho-[N-acetyl-alpha-D-glucosaminyl-(1-&gt;4)]-N-acetyl-alpha-D-muramoyl-L-alanyl-D-glutamyl-meso-2,6-diaminopimeloyl-D-alanyl-D-alanine + UDP + H(+). It participates in cell wall biogenesis; peptidoglycan biosynthesis. Cell wall formation. Catalyzes the transfer of a GlcNAc subunit on undecaprenyl-pyrophosphoryl-MurNAc-pentapeptide (lipid intermediate I) to form undecaprenyl-pyrophosphoryl-MurNAc-(pentapeptide)GlcNAc (lipid intermediate II). The chain is UDP-N-acetylglucosamine--N-acetylmuramyl-(pentapeptide) pyrophosphoryl-undecaprenol N-acetylglucosamine transferase from Mycolicibacterium paratuberculosis (strain ATCC BAA-968 / K-10) (Mycobacterium paratuberculosis).